Consider the following 309-residue polypeptide: Serine/threonine-protein phosphatase 2A catalytic subunit beta isoform (309 aa).

Mn(2+) contacts are provided by aspartate 57, histidine 59, aspartate 85, and asparagine 117. Histidine 118 functions as the Proton donor in the catalytic mechanism. Mn(2+) is bound by residues histidine 167 and histidine 241. Tyrosine 307 is subject to Phosphotyrosine. A Leucine methyl ester modification is found at leucine 309.

This sequence belongs to the PPP phosphatase family. PP-1 subfamily. In terms of assembly, PP2A consists of a common heterodimeric core enzyme (composed of a 36 kDa catalytic subunit (subunit C) and a 65 kDa constant regulatory subunit (PR65) (subunit A)) that associates with a variety of regulatory subunits. Proteins that associate with the core dimer include three families of regulatory subunits B (the R2/B/PR55/B55, R3/B''/PR72/PR130/PR59 and R5/B'/B56 families), the 48 kDa variable regulatory subunit, viral proteins, and cell signaling molecules. Binds PPME1. May indirectly interact with SGO1, most probably through regulatory B56 subunits. Found in a complex with at least ARL2, PPP2CB, PPP2R1A, PPP2R2A, PPP2R5E and TBCD. Interacts with TBCD. Interacts with CTTNBP2NL. Interacts with PTPA. Part of the core of STRIPAK complexes composed of PP2A catalytic and scaffolding subunits, the striatins (PP2A regulatory subunits), the striatin-associated proteins MOB4, STRIP1 and STRIP2, PDCD10 and members of the STE20 kinases, such as STK24 and STK26. Requires Mn(2+) as cofactor. In terms of processing, reversibly methyl esterified on Leu-309 by leucine carboxyl methyltransferase 1 (LCMT1) and protein phosphatase methylesterase 1 (PPME1). Carboxyl methylation influences the affinity of the catalytic subunit for the different regulatory subunits, thereby modulating the PP2A holoenzyme's substrate specificity, enzyme activity and cellular localization. Post-translationally, phosphorylation of either threonine (by autophosphorylation-activated protein kinase) or tyrosine results in inactivation of the phosphatase. Auto-dephosphorylation has been suggested as a mechanism for reactivation. May be monoubiquitinated by NOSIP.

It is found in the cytoplasm. The protein resides in the nucleus. Its subcellular location is the chromosome. It localises to the centromere. The protein localises to the cytoskeleton. It is found in the spindle pole. The enzyme catalyses O-phospho-L-seryl-[protein] + H2O = L-seryl-[protein] + phosphate. The catalysed reaction is O-phospho-L-threonyl-[protein] + H2O = L-threonyl-[protein] + phosphate. Functionally, catalytic subunit of protein phosphatase 2A (PP2A), a serine/threonine phosphatase involved in the regulation of a wide variety of enzymes, signal transduction pathways, and cellular events. PP2A can modulate the activity of phosphorylase B kinase, casein kinase 2, mitogen-stimulated S6 kinase, and MAP-2 kinase. Part of the striatin-interacting phosphatase and kinase (STRIPAK) complexes. STRIPAK complexes have critical roles in protein (de)phosphorylation and are regulators of multiple signaling pathways including Hippo, MAPK, nuclear receptor and cytoskeleton remodeling. Different types of STRIPAK complexes are involved in a variety of biological processes such as cell growth, differentiation, apoptosis, metabolism and immune regulation. This is Serine/threonine-protein phosphatase 2A catalytic subunit beta isoform (PPP2CB) from Bos taurus (Bovine).